A 172-amino-acid chain; its full sequence is RNA pyrophosphohydrolase (172 aa).

One can recognise a Nudix hydrolase domain in the interval 6 to 149; sequence GYRLNVGIVI…KRDVYRRAMK (144 aa). Residues 38–59 carry the Nudix box motif; sequence GGIDDGESPEQAMFRELYEEVG.

This sequence belongs to the Nudix hydrolase family. RppH subfamily. It depends on a divalent metal cation as a cofactor.

Its function is as follows. Accelerates the degradation of transcripts by removing pyrophosphate from the 5'-end of triphosphorylated RNA, leading to a more labile monophosphorylated state that can stimulate subsequent ribonuclease cleavage. The sequence is that of RNA pyrophosphohydrolase from Vibrio cholerae serotype O1 (strain ATCC 39315 / El Tor Inaba N16961).